The primary structure comprises 394 residues: Glycogen synthase kinase 1 (394 aa).

Positions 35 to 318 constitute a Protein kinase domain; it reads YTQCKIVGNG…AIDAMVHPFF (284 aa). Residues 41 to 49 and K64 each bind ATP; that span reads VGNGSFGVV.

The protein belongs to the protein kinase superfamily. CMGC Ser/Thr protein kinase family. GSK-3 subfamily.

The protein localises to the cytoplasm. The catalysed reaction is L-seryl-[protein] + ATP = O-phospho-L-seryl-[protein] + ADP + H(+). Its function is as follows. Protein kinase that acts downstream of the MPS1 MAPK cascade as a highly conservative signal modulator that dictates growth, conidiation and pathogenicity. Phosphorylates HAT1 at 'Ser-8' to block its translocation from the nucleus to the cytoplasm where HAT1 positively regulates appressorium development and pathogenicity. This Pyricularia oryzae (Rice blast fungus) protein is Glycogen synthase kinase 1.